We begin with the raw amino-acid sequence, 196 residues long: Peptidyl-tRNA hydrolase (196 aa).

Tyr-18 is a binding site for tRNA. The active-site Proton acceptor is the His-23. Residues Phe-69, Asn-71, and Asn-117 each coordinate tRNA.

This sequence belongs to the PTH family. As to quaternary structure, monomer.

It is found in the cytoplasm. It catalyses the reaction an N-acyl-L-alpha-aminoacyl-tRNA + H2O = an N-acyl-L-amino acid + a tRNA + H(+). Functionally, hydrolyzes ribosome-free peptidyl-tRNAs (with 1 or more amino acids incorporated), which drop off the ribosome during protein synthesis, or as a result of ribosome stalling. In terms of biological role, catalyzes the release of premature peptidyl moieties from peptidyl-tRNA molecules trapped in stalled 50S ribosomal subunits, and thus maintains levels of free tRNAs and 50S ribosomes. The protein is Peptidyl-tRNA hydrolase of Aliivibrio fischeri (strain MJ11) (Vibrio fischeri).